The sequence spans 417 residues: D-inositol 3-phosphate glycosyltransferase (417 aa).

H15 is a 1D-myo-inositol 3-phosphate binding site. Residues 21-22 (QP) and G29 contribute to the UDP-N-acetyl-alpha-D-glucosamine site. 1D-myo-inositol 3-phosphate is bound by residues 26 to 31 (DAGGMN), K84, Y117, T141, and R161. UDP-N-acetyl-alpha-D-glucosamine is bound by residues R241, K246, and V299. Mg(2+) contacts are provided by Y308, R309, and A311. Residues E321 and E329 each contribute to the UDP-N-acetyl-alpha-D-glucosamine site. T335 contributes to the Mg(2+) binding site.

It belongs to the glycosyltransferase group 1 family. MshA subfamily. Homodimer.

The enzyme catalyses 1D-myo-inositol 3-phosphate + UDP-N-acetyl-alpha-D-glucosamine = 1D-myo-inositol 2-acetamido-2-deoxy-alpha-D-glucopyranoside 3-phosphate + UDP + H(+). Its function is as follows. Catalyzes the transfer of a N-acetyl-glucosamine moiety to 1D-myo-inositol 3-phosphate to produce 1D-myo-inositol 2-acetamido-2-deoxy-glucopyranoside 3-phosphate in the mycothiol biosynthesis pathway. This Xylanimonas cellulosilytica (strain DSM 15894 / JCM 12276 / CECT 5975 / KCTC 9989 / LMG 20990 / NBRC 107835 / XIL07) protein is D-inositol 3-phosphate glycosyltransferase.